A 394-amino-acid polypeptide reads, in one-letter code: Endothelial cell-selective adhesion molecule (394 aa).

An N-terminal signal peptide occupies residues 1 to 29; it reads MILQAGTPETSLLRVLFLGLSTLAAFSRA. At 30–251 the chain is on the extracellular side; the sequence is QMELHVPPGL…LDVMTGSKAA (222 aa). Residues 37–146 enclose the Ig-like V-type domain; it reads PGLNKLEAVE…EGKSIGHSIK (110 aa). Asn-111, Asn-172, Asn-216, and Asn-239 each carry an N-linked (GlcNAc...) asparagine glycan. In terms of domain architecture, Ig-like C2-type spans 159–243; sequence PSCSLQGVPY…GFAKCNVTLD (85 aa). The cysteines at positions 177 and 227 are disulfide-linked. Residues 252-272 form a helical membrane-spanning segment; that stretch reads VVAGAVVGTFVGLVLIAGLVL. The Cytoplasmic segment spans residues 273–394; it reads LYQRRSKTLE…PAQSQAGSLV (122 aa). A Phosphoserine modification is found at Ser-304. Composition is skewed to polar residues over residues 304–318 and 335–347; these read SDTISKNGTLSSVTS and FTPTPSVSSQALS. The segment at 304–372 is disordered; that stretch reads SDTISKNGTL…SLTPGGVSSS (69 aa). 2 positions are modified to phosphothreonine: Thr-336 and Thr-338. Ser-340, Ser-343, Ser-348, and Ser-375 each carry phosphoserine.

Interacts with MAGI1. In terms of tissue distribution, highly expressed in the heart and lung. Weakly expressed in the kidney and skin. Expression is restricted to the vascular endothelial cells. Expressed in the kidney, heart and tongue (at protein level). Also expressed on megakaryocytes and activated platelets.

It localises to the cell junction. It is found in the adherens junction. The protein localises to the tight junction. Its subcellular location is the cell membrane. Can mediate aggregation most likely through a homophilic molecular interaction. This chain is Endothelial cell-selective adhesion molecule (Esam), found in Mus musculus (Mouse).